The sequence spans 454 residues: Adenylosuccinate synthetase isozyme 1 B (454 aa).

The disordered stretch occupies residues 1 to 24 (MSGTRASNDRSSHPGAGGHKRPRY). Residues 39-45 (GDEGKGK) and 67-69 (GHT) contribute to the GTP site. The active-site Proton acceptor is Asp-40. Residues Asp-40 and Gly-67 each coordinate Mg(2+). Residue Asp-40 coordinates substrate. Residues 40–43 (DEGK), 65–68 (NAGH), Thr-160, Arg-174, Asn-253, Thr-268, and Arg-332 each bind IMP. The Proton donor role is filled by His-68. Position 328 to 334 (328 to 334 (VTTGRKR)) interacts with substrate. GTP is bound by residues Arg-334, 360 to 362 (KLD), and 442 to 445 (GVGK).

This sequence belongs to the adenylosuccinate synthetase family. Homodimer. Mg(2+) serves as cofactor.

It localises to the cytoplasm. The enzyme catalyses IMP + L-aspartate + GTP = N(6)-(1,2-dicarboxyethyl)-AMP + GDP + phosphate + 2 H(+). Its pathway is purine metabolism; AMP biosynthesis via de novo pathway; AMP from IMP: step 1/2. Functionally, component of the purine nucleotide cycle (PNC), which interconverts IMP and AMP to regulate the nucleotide levels in various tissues, and which contributes to glycolysis and ammoniagenesis. Catalyzes the first committed step in the biosynthesis of AMP from IMP. This is Adenylosuccinate synthetase isozyme 1 B (adss1-b) from Xenopus laevis (African clawed frog).